A 433-amino-acid chain; its full sequence is GPI mannosyltransferase 2 (433 aa).

Methionine 1 is a topological domain (cytoplasmic). Residues 2–22 (IVGLTLYFVLFRSIQYLLVFL) form a helical membrane-spanning segment. The Lumenal segment spans residues 23–109 (TPIRQFDTST…NNDSIYHALR (87 aa)). 2 N-linked (GlcNAc...) asparagine glycosylation sites follow: asparagine 69 and asparagine 101. Residues 110-130 (VGVAIENVLFYLSGIVLYFLT) traverse the membrane as a helical segment. Residues 131–161 (KKIFSQNIRQSQFARTIAKKTSLLFFLTSAA) lie on the Cytoplasmic side of the membrane. A helical transmembrane segment spans residues 162 to 182 (GFLTSIYSEPLSFFFAFVGIW). At 183 to 215 (SRECSISVPVLGQFDISWRYWFPYSFISMACFT) the chain is on the lumenal side. Residues 216 to 236 (LASLNRSNCVLLGIYFIFDLI) form a helical membrane-spanning segment. Over 237 to 243 (ELTKNRK) the chain is Cytoplasmic. A helical transmembrane segment spans residues 244–264 (FVKAICFPLLSGSLMFSALLY). The Lumenal segment spans residues 265–318 (QQYYLPYKTFCPQRGEWCKSQLFSSIFITKTSLYSYIQSHYWGVGLLKYWTPNN). Residues 319–339 (IPNFLFAVPNIIILIYSSIYF) form a helical membrane-spanning segment. Residues 340 to 350 (SKIYPSYNLKA) lie on the Cytoplasmic side of the membrane. Residues 351 to 371 (LVWITRALVVIVCFFAHVQIL) form a helical membrane-spanning segment. The Lumenal portion of the chain corresponds to 372–409 (NRIASFLPLHLWYLADRLVKTSDPKKMENPKGDDKIVK). A helical membrane pass occupies residues 410–430 (FYIYWLAFWIPLQTILFAAFL). Residues 431 to 433 (PPA) are Cytoplasmic-facing.

This sequence belongs to the PIGV family. Part of the GPI mannosyltransferase 2 complex composed of GPI18 and PGA1.

The protein localises to the endoplasmic reticulum membrane. The protein operates within glycolipid biosynthesis; glycosylphosphatidylinositol-anchor biosynthesis. Mannosyltransferase involved in glycosylphosphatidylinositol-anchor biosynthesis. Responsible for the transfer of the second mannose to the glycosylphosphatidylinositol during GPI precursor assembly. This is GPI mannosyltransferase 2 (GPI18) from Saccharomyces cerevisiae (strain ATCC 204508 / S288c) (Baker's yeast).